Here is a 433-residue protein sequence, read N- to C-terminus: Pyrimidine-nucleoside phosphorylase (433 aa).

A phosphate-binding site is contributed by 81-83 (KHS). Residues Gly88 and Thr90 each coordinate K(+). Residues Thr92, 108 to 110 (KMS), and Thr120 contribute to the phosphate site. 2 residues coordinate substrate: Arg168 and Lys187. 3 residues coordinate K(+): Leu243, Ala246, and Glu255.

This sequence belongs to the thymidine/pyrimidine-nucleoside phosphorylase family. In terms of assembly, homodimer. It depends on K(+) as a cofactor.

It catalyses the reaction uridine + phosphate = alpha-D-ribose 1-phosphate + uracil. It carries out the reaction thymidine + phosphate = 2-deoxy-alpha-D-ribose 1-phosphate + thymine. The enzyme catalyses 2'-deoxyuridine + phosphate = 2-deoxy-alpha-D-ribose 1-phosphate + uracil. In terms of biological role, catalyzes phosphorolysis of the pyrimidine nucleosides uridine, thymidine and 2'-deoxyuridine with the formation of the corresponding pyrimidine base and ribose-1-phosphate. This chain is Pyrimidine-nucleoside phosphorylase (pdp), found in Geobacillus stearothermophilus (Bacillus stearothermophilus).